Reading from the N-terminus, the 100-residue chain is MCSGPKQGLTLPASVDLEKETVITGRVVDGDGQAVGGAFVRLLDSSDEFTAEVVASATGDFRFFAAPGSWTLRALSAAGNGDAVVQPSGAGIHEVDVKIT.

Lys-98 participates in a covalent cross-link: Isoglutamyl lysine isopeptide (Lys-Gln) (interchain with Q-Cter in protein Pup).

This is an uncharacterized protein from Mycobacterium tuberculosis (strain CDC 1551 / Oshkosh).